A 125-amino-acid chain; its full sequence is Small ribosomal subunit protein eS6 (125 aa).

Residues Lys-90–Gly-109 are disordered.

Belongs to the eukaryotic ribosomal protein eS6 family. As to quaternary structure, part of the 30S ribosomal subunit.

The polypeptide is Small ribosomal subunit protein eS6 (Pyrococcus furiosus (strain ATCC 43587 / DSM 3638 / JCM 8422 / Vc1)).